The chain runs to 160 residues: Large ribosomal subunit protein uL11 (160 aa).

The protein belongs to the universal ribosomal protein uL11 family. As to quaternary structure, part of the ribosomal stalk of the 50S ribosomal subunit. Interacts with L10 and the large rRNA to form the base of the stalk. L10 forms an elongated spine to which L12 dimers bind in a sequential fashion forming a multimeric L10(L12)X complex.

Forms part of the ribosomal stalk which helps the ribosome interact with GTP-bound translation factors. This Methanothermobacter thermautotrophicus (strain ATCC 29096 / DSM 1053 / JCM 10044 / NBRC 100330 / Delta H) (Methanobacterium thermoautotrophicum) protein is Large ribosomal subunit protein uL11.